Here is a 462-residue protein sequence, read N- to C-terminus: O-methyltransferase CTB2 (462 aa).

Residue Asp-289 participates in S-adenosyl-L-methionine binding. His-340 (proton acceptor) is an active-site residue.

Belongs to the class I-like SAM-binding methyltransferase superfamily. Cation-independent O-methyltransferase family. COMT subfamily.

The protein operates within mycotoxin biosynthesis. In terms of biological role, O-methyltransferase; part of the gene cluster that mediates the biosynthesis of cercosporin, a light-activated, non-host-selective toxin. The perylenequinone chromophore of cercosporin absorbs light energy to attain an electronically-activated triplet state and produces active oxygen species such as the hydroxyl radical, superoxide, hydrogen peroxide or singlet oxygen upon reaction with oxygen molecules. These reactive oxygen species cause damage to various cellular components including lipids, proteins and nucleic acids. The first step of cercosporin biosynthesis is performed by the polyketide synthase CTB1 which catalyzes the formation of nor-toralactone. The starter unit acyltransferase (SAT) domain of CTB1 initiates polyketide extension by the selective utilization of acetyl-CoA, which is elongated to the heptaketide in the beta-ketoacyl synthase (KS) domain by successive condensations with six malonyl units introduced by the malonyl acyltransferase (MAT) domain. The product template (PT) domain catalyzes C4-C9 and C2-C11 aldol cyclizations and dehydrations to a trihydroxynaphthalene, which is thought to be delivered to the thioesterase (TE) domain for product release. The bifunctional enzyme CTB3 then methylates nor-toralactone to toralactone before conducting an unusual oxidative aromatic ring opening. The O-methyltransferase CTB2 further methylates the nascent OH-6 of the CBT3 product, blocking further oxidation at this site before the reductase CTB6 reduces the 2-oxopropyl ketone at position C7, giving naphthalene. The FAD-dependent monooxygenase CTB5 in concert with the multicopper oxidase CTB12 are responsible for homodimerization of naphthalene with CTB7 installing the dioxepine moiety, finally producing cercosporin. The fasciclin domain-containing protein CTB11 might act with CTB5 and CTB12 whereas the roles of CTB9 and CTB10 have still to be elucidated. The protein is O-methyltransferase CTB2 of Cercospora beticola (Sugarbeet leaf spot fungus).